Here is a 131-residue protein sequence, read N- to C-terminus: SPbeta prophage-derived uncharacterized protein YoqY (131 aa).

The protein is SPbeta prophage-derived uncharacterized protein YoqY (yoqY) of Bacillus subtilis (strain 168).